A 245-amino-acid polypeptide reads, in one-letter code: 3-deoxy-manno-octulosonate cytidylyltransferase (245 aa).

Belongs to the KdsB family.

It is found in the cytoplasm. The enzyme catalyses 3-deoxy-alpha-D-manno-oct-2-ulosonate + CTP = CMP-3-deoxy-beta-D-manno-octulosonate + diphosphate. Its pathway is nucleotide-sugar biosynthesis; CMP-3-deoxy-D-manno-octulosonate biosynthesis; CMP-3-deoxy-D-manno-octulosonate from 3-deoxy-D-manno-octulosonate and CTP: step 1/1. It participates in bacterial outer membrane biogenesis; lipopolysaccharide biosynthesis. In terms of biological role, activates KDO (a required 8-carbon sugar) for incorporation into bacterial lipopolysaccharide in Gram-negative bacteria. This chain is 3-deoxy-manno-octulosonate cytidylyltransferase, found in Rhodopseudomonas palustris (strain TIE-1).